Consider the following 244-residue polypeptide: Large ribosomal subunit protein uL3 (244 aa).

It belongs to the universal ribosomal protein uL3 family. Part of the 50S ribosomal subunit. Forms a cluster with proteins L14 and L19.

Its function is as follows. One of the primary rRNA binding proteins, it binds directly near the 3'-end of the 23S rRNA, where it nucleates assembly of the 50S subunit. The sequence is that of Large ribosomal subunit protein uL3 from Aquifex pyrophilus.